The primary structure comprises 397 residues: MATDKGLEDVPEGQIESNYDETVDSFDDMNLKSELLRGIYAYGFERPSAIQQRAIMPVIKGHDVIAQAQSGTGKTATFSISVLQKIDPTVKSCQALILAPTRELAQQIQKVVIAIGDFMNIECHACIGGTSVRDDMKALQDGPQVIVGTPGRVHDMIQRRILKTDQMKMFVLDEADEMLSRGFTEQIYDIFQLLPQSTQVVLLSATMPQDVLEVTTKFMRDPVRILVKKDELTLEGIKQFYIAVEKEDWKLDTLSDLYETVTITQAVIFCNTRRKVDWLTDKLQARDFTVSAMHGDMDQTQRDLIMKEFRSGSSRVLIATDLLARGIDVQQVSLVINYDLPANRENYIHRIGRGGRFGRKGVAINFVTADDVRMMREIEQFYSTQIEEMPMNVADLI.

Positions 24–52 (DSFDDMNLKSELLRGIYAYGFERPSAIQQ) match the Q motif motif. In terms of domain architecture, Helicase ATP-binding spans 55 to 225 (IMPVIKGHDV…TKFMRDPVRI (171 aa)). 68-75 (AQSGTGKT) serves as a coordination point for ATP. Residues 173 to 176 (DEAD) carry the DEAD box motif. In terms of domain architecture, Helicase C-terminal spans 236–397 (GIKQFYIAVE…EMPMNVADLI (162 aa)).

The protein belongs to the DEAD box helicase family. eIF4A subfamily. Component of the eIF4F complex, which composition varies with external and internal environmental conditions. It is composed of at least eIF4A, eIF4E and eIF4G.

Its subcellular location is the cytoplasm. The catalysed reaction is ATP + H2O = ADP + phosphate + H(+). Its function is as follows. ATP-dependent RNA helicase which is a subunit of the eIF4F complex involved in cap recognition and is required for mRNA binding to ribosome. In the current model of translation initiation, eIF4A unwinds RNA secondary structures in the 5'-UTR of mRNAs which is necessary to allow efficient binding of the small ribosomal subunit, and subsequent scanning for the initiator codon. This is ATP-dependent RNA helicase eIF4A (TIF1) from Chaetomium globosum (strain ATCC 6205 / CBS 148.51 / DSM 1962 / NBRC 6347 / NRRL 1970) (Soil fungus).